The following is a 691-amino-acid chain: MSRTLFVTTALPYANGSFHIGHIMEYIQADIWVRSMRMAGHTVHFVGADDAHGAPIMLKAEKEGITPQALVARYAAERPRYLDGFHIRFDHWHSTDSAENVALSHEIYRALKAAGLIETRSIEQFFDPVKGMFLADRYIKGECPRCHAKDQYGDSCEVCGAVYAPTELIQPYSALTGATPVLKRSDHFFFKLSDPRCVEFLQQWTTGSNRNGIKHLQSEVQAKTREWLGGEEGEAKLGDWDISRDAPYFGIEIPDAPGKYFYVWLDAPVGYLASLKSYCDKIGLDFDALLDPSSATEQVHFIGKDIIYFHALFWPAMLKFAGRKTPDALNVHGFITVSGEKMSKSRGTGISPLRYLEVGMDPEWLRYYMAAKLNARVEDMDFNPEDFIARVNSDLVGKYVNIASRAANFITRHFEGKLAYLGDTAALSAEFAQQTESIRAALEAREFNRAIREIMAYADGINQAFDAAQPWVLAKGFAEADEARRAQLQDICSRALAGFKALSVMLAPVLPALTSRVARDLFGAQRDFIWSDAADLPAQVAPFKHLMQRVDPQMLDALFEPPAELAAPAPTPGGEALADTISIDDFVKVDLRIAKIINCEEVEGSTKLLRLTLDAGEGRHRNVFSGIKSFYKPQDLIGKLTVLVANLAPRKMKFGVSEGMVLAASHADEKVDAGIYVLEPWPGAQPGMRIH.

The 'HIGH' region signature appears at 12–22 (PYANGSFHIGH). Zn(2+) contacts are provided by C143, C146, C156, and C159. A 'KMSKS' region motif is present at residues 341 to 345 (KMSKS). K344 is a binding site for ATP. One can recognise a tRNA-binding domain in the interval 585–691 (DFVKVDLRIA…PGAQPGMRIH (107 aa)).

It belongs to the class-I aminoacyl-tRNA synthetase family. MetG type 1 subfamily. As to quaternary structure, homodimer. The cofactor is Zn(2+).

The protein resides in the cytoplasm. The enzyme catalyses tRNA(Met) + L-methionine + ATP = L-methionyl-tRNA(Met) + AMP + diphosphate. Its function is as follows. Is required not only for elongation of protein synthesis but also for the initiation of all mRNA translation through initiator tRNA(fMet) aminoacylation. This chain is Methionine--tRNA ligase, found in Bordetella avium (strain 197N).